The following is a 541-amino-acid chain: Carotenoid-cleaving dioxygenase, mitochondrial (541 aa).

Residues His-188, His-248, His-319, and His-535 each contribute to the Fe cation site.

This sequence belongs to the carotenoid oxygenase family. Fe(2+) serves as cofactor. In terms of tissue distribution, widely expressed. Detected in heart, spleen, lung, intestine, colon, stomach, kidney, bladder, and prostate. Highly expressed in liver and testis (at protein level).

It is found in the mitochondrion. The enzyme catalyses all-trans-beta-carotene + O2 = beta-ionone + all-trans-10'-apo-beta-carotenal. It carries out the reaction 5-cis-lycopene + O2 = 5-cis-10'-apo-lycopenal + (3E,5E)-6,10-dimethylundeca-3,5,9-trien-2-one. It catalyses the reaction 13-cis-lycopene + O2 = 13-cis-10'-apo-lycopenal + (3E,5E)-6,10-dimethylundeca-3,5,9-trien-2-one. The catalysed reaction is lutein + O2 = (3R,6R)-hydroxy-alpha-ionone + (3R)-3-hydroxy-10'-apo-beta-carotenal. The enzyme catalyses lutein + O2 = (3R,6R)-3-hydroxy-10'-apo-alpha-carotenal + (3R)-hydroxy-beta-ionone. It carries out the reaction all-trans-zeaxanthin + 2 O2 = 4,9-dimethyldodeca-2,4,6,8,10-pentaenedial + 2 (3R)-hydroxy-beta-ionone. It catalyses the reaction all-trans-zeaxanthin + O2 = (3R)-3-hydroxy-10'-apo-beta-carotenal + (3R)-hydroxy-beta-ionone. The catalysed reaction is beta-cryptoxanthin + O2 = all-trans-10'-apo-beta-carotenal + (3R)-hydroxy-beta-ionone. The enzyme catalyses all-trans-10'-apo-beta-carotenal + O2 = beta-ionone + 4,9-dimethyldodeca-2,4,6,8,10-pentaenedial. It carries out the reaction (3R)-3-hydroxy-10'-apo-beta-carotenal + O2 = 4,9-dimethyldodeca-2,4,6,8,10-pentaenedial + (3R)-hydroxy-beta-ionone. It catalyses the reaction (3R,6R)-3-hydroxy-10'-apo-alpha-carotenal + O2 = (3R,6R)-hydroxy-alpha-ionone + 4,9-dimethyldodeca-2,4,6,8,10-pentaenedial. In terms of biological role, broad specificity mitochondrial dioxygenase that mediates the asymmetric oxidative cleavage of carotenoids. Cleaves carotenes (pure hydrocarbon carotenoids) such as all-trans-beta-carotene and lycopene as well as xanthophylls (oxygenated carotenoids) such as zeaxanthin, lutein and beta-cryptoxanthin at both the 9,10 and the 9',10' carbon-carbon double bond. Through its function in carotenoids metabolism regulates oxidative stress and the production of important signaling molecules. In Mustela putorius furo (European domestic ferret), this protein is Carotenoid-cleaving dioxygenase, mitochondrial.